We begin with the raw amino-acid sequence, 103 residues long: Large ribosomal subunit protein bL21 (103 aa).

The protein belongs to the bacterial ribosomal protein bL21 family. In terms of assembly, part of the 50S ribosomal subunit. Contacts protein L20.

Its function is as follows. This protein binds to 23S rRNA in the presence of protein L20. The sequence is that of Large ribosomal subunit protein bL21 from Enterobacter sp. (strain 638).